The primary structure comprises 392 residues: Chaperone protein DnaJ (392 aa).

Residues 5-75 enclose the J domain; that stretch reads DYYEVLGIDK…QKKQQYDQFG (71 aa). The CR-type zinc-finger motif lies at 148–229; the sequence is GVEKTIKYKR…CHGTGTAKET (82 aa). Zn(2+) contacts are provided by C161, C164, C177, C180, C203, C206, C217, and C220. 4 CXXCXGXG motif repeats span residues 161–168, 177–184, 203–210, and 217–224; these read CENCHGTG, CPTCNGQG, CPDCHGTG, and CKHCHGTG.

The protein belongs to the DnaJ family. As to quaternary structure, homodimer. Zn(2+) serves as cofactor.

It localises to the cytoplasm. In terms of biological role, participates actively in the response to hyperosmotic and heat shock by preventing the aggregation of stress-denatured proteins and by disaggregating proteins, also in an autonomous, DnaK-independent fashion. Unfolded proteins bind initially to DnaJ; upon interaction with the DnaJ-bound protein, DnaK hydrolyzes its bound ATP, resulting in the formation of a stable complex. GrpE releases ADP from DnaK; ATP binding to DnaK triggers the release of the substrate protein, thus completing the reaction cycle. Several rounds of ATP-dependent interactions between DnaJ, DnaK and GrpE are required for fully efficient folding. Also involved, together with DnaK and GrpE, in the DNA replication of plasmids through activation of initiation proteins. This chain is Chaperone protein DnaJ, found in Fusobacterium nucleatum subsp. nucleatum (strain ATCC 25586 / DSM 15643 / BCRC 10681 / CIP 101130 / JCM 8532 / KCTC 2640 / LMG 13131 / VPI 4355).